Here is a 72-residue protein sequence, read N- to C-terminus: Mu-like prophage FluMu protein C (72 aa).

Positions 35-55 (NVPDLIKKYRLSESTIYAILR) form a DNA-binding region, H-T-H motif.

Belongs to the c/mor transcriptional regulatory family.

In terms of biological role, required for transcription of the phage late genes. This Haemophilus influenzae (strain ATCC 51907 / DSM 11121 / KW20 / Rd) protein is Mu-like prophage FluMu protein C.